Reading from the N-terminus, the 503-residue chain is Protein-cysteine N-palmitoyltransferase HHAT-like protein (503 aa).

A run of 8 helical transmembrane segments spans residues 12 to 31 (LGLY…RGLL), 65 to 87 (WVMW…VLFA), 100 to 122 (WMYA…LLLL), 127 to 149 (MVLY…LASL), 250 to 272 (AGLS…ILTI), 287 to 309 (LAGL…FGVV), 426 to 445 (VRAL…NLVS), and 460 to 482 (ILTG…VQLV).

Belongs to the membrane-bound acyltransferase family. HHAT subfamily. Interacts with SHH.

Its subcellular location is the endoplasmic reticulum membrane. Negatively regulates N-terminal palmitoylation of SHH by HHAT/SKN. The protein is Protein-cysteine N-palmitoyltransferase HHAT-like protein (Hhatl) of Mus musculus (Mouse).